A 639-amino-acid chain; its full sequence is RNA polymerase II elongation factor ELL2 (639 aa).

Disordered stretches follow at residues 175–203 (DTVP…SVSQ), 291–326 (LNPS…SDFI), 378–416 (PSTH…SFSQ), and 439–513 (PSSA…EGCT). The segment covering 291–317 (LNPSQNASTSRSESPLCSSKDAASSPQ) has biased composition (polar residues). Positions 378 to 401 (PSTHLPVSNPPQTVNSNSNSPSTP) are enriched in low complexity. Positions 457-469 (SHKKSKKKSKKHK) are enriched in basic residues. Residues 470-479 (EKDQIKKLDI) are compositionally biased toward basic and acidic residues. Residues 480-490 (ETMEEKEEDLQ) are compositionally biased toward acidic residues. Phosphoserine occurs at positions 501 and 579. The OCEL domain occupies 525-635 (PDYLIKYIAI…LIGEFDQQQA (111 aa)).

It belongs to the ELL/occludin family. In terms of assembly, component of the super elongation complex (SEC), at least composed of EAF1, EAF2, CDK9, MLLT3/AF9, AFF (AFF1 or AFF4), the P-TEFb complex and ELL (ELL, ELL2 or ELL3). Component of the little elongation complex (LEC), at least composed of ELL (ELL, ELL2 or ELL3), ZC3H8, ICE1 and ICE2. Interacts with AFF4; the interaction is direct and leads to stabilize ELL2 and prevent ELL2 ubiquitination. Interacts with EAF1 and EAF2. Post-translationally, ubiquitinated by SIAH1, leading to its degradation by the proteasome. Interaction with AFF4 stabilizes ELL2 and prevents ELL2 ubiquitination.

Its subcellular location is the nucleus. Functionally, elongation factor component of the super elongation complex (SEC), a complex required to increase the catalytic rate of RNA polymerase II transcription by suppressing transient pausing by the polymerase at multiple sites along the DNA. Component of the little elongation complex (LEC), a complex required to regulate small nuclear RNA (snRNA) gene transcription by RNA polymerase II and III. Plays a role in immunoglobulin secretion in plasma cells: directs efficient alternative mRNA processing, influencing both proximal poly(A) site choice and exon skipping, as well as immunoglobulin heavy chain (IgH) alternative processing. Probably acts by regulating histone modifications accompanying transition from membrane-specific to secretory IgH mRNA expression. The sequence is that of RNA polymerase II elongation factor ELL2 (Ell2) from Mus musculus (Mouse).